We begin with the raw amino-acid sequence, 591 residues long: Paxillin (591 aa).

Position 1 is an N-acetylmethionine (methionine 1). An LD motif 1 motif is present at residues 3-15 (DLDALLADLESTT). Residues 17–138 (HISKRPVFLS…SSPTVMSTSL (122 aa)) form a disordered region. Tyrosine 31 carries the post-translational modification Phosphotyrosine; by PTK6. Residues 45–54 (VPPPVPPPPS) are compositionally biased toward pro residues. Polar residues predominate over residues 69–101 (WQPSGSRFIHQQPQSSSPVYGSSAKTSSVSNPQ). 2 positions are modified to phosphoserine: serine 83 and serine 85. The residue at position 88 (tyrosine 88) is a Phosphotyrosine. Serine 106 is subject to Phosphoserine. Phosphotyrosine; by PTK6 is present on tyrosine 118. Residues serine 119, serine 126, and serine 130 each carry the phosphoserine modification. Over residues 121 to 137 (PNKQKSAESSPTVMSTS) the composition is skewed to polar residues. Threonine 132 carries the post-translational modification Phosphothreonine. A phosphoserine mark is found at serine 137, serine 140, and serine 143. The LD motif 2 signature appears at 144-156 (ELDRLLLELNAVQ). The interval 156 to 213 (QHNPPGFPADEANSGPPLPGALSPHYGVPETNSPLGGKAGPLTKEKPKRNGGRGLEDV) is disordered. The residue at position 181 (tyrosine 181) is a Phosphotyrosine. The LD motif 3 motif lies at 216-228 (SVESLLDELESSV). A Phosphoserine modification is found at serine 230. Residues 237 to 260 (VNQGEMSSPQRVTSTQQQTRISAS) are disordered. Serine 244 is modified (phosphoserine; by CDK5). Serine 250, serine 258, serine 261, and serine 272 each carry phosphoserine. Residues 265–276 (ELDELMASLSDF) carry the LD motif 4 motif. A compositionally biased stretch (basic and acidic residues) spans 289–300 (RCWAADWPRDGG). The interval 289-335 (RCWAADWPRDGGRSSPGGQDEGGFMAQGKTGSSSPPGGPPKPGSQLD) is disordered. Phosphoserine is present on residues serine 303, serine 322, serine 332, and serine 340. The LD motif 5 motif lies at 333-345 (QLDSMLGSLQSDL). 4 consecutive LIM zinc-binding domains span residues 356 to 415 (GVCG…LFSP), 416 to 473 (RCYY…DMFA), 474 to 533 (PKCG…RRGS), and 534 to 591 (LCSG…KLFC). At serine 533 the chain carries Phosphoserine.

It belongs to the paxillin family. Binds to vinculin and to the SH3 domain of SRC. Interacts with GIT1, NUDT16L1/SDOS, PARVA, PARVB, SORBS1 and TGFB1I1. Component of cytoplasmic complexes, which also contain GIT1, ARHGEF6 and PAK1. Binds ASAP2. Interacts with RNF5 and PDCD10. Interacts with NEK3 and this interaction is prolactin-dependent. Interacts with PTK2/FAK1 and PTK2B/PYK2. Interacts with PTK6. Interacts with CD36. Interacts (via cytoplasmic domain) with CEACAM1; the interaction is phosphotyrosyl-dependent. Interacts with PXN; this complex stabilizes actin dynamics. Interacts with TRIM15. Interacts with PAK4; PAK4 acts as a scaffold to suppport PAXI phosphorylation at Ser-272. Phosphorylated by MAPK1/ERK2. Phosphorylated on tyrosine residues during integrin-mediated cell adhesion, embryonic development, fibroblast transformation and following stimulation of cells by mitogens. Phosphorylation at Ser-244 by CDK5 reduces its interaction with PTK2/FAK1 in matrix-cell focal adhesions (MCFA) during oligodendrocytes (OLs) differentiation. Phosphorylation at Tyr-31 and Tyr-118 by PTK6 promote the activation of RAC1 via CRK/CrKII, thereby promoting migration and invasion. Phosphorylation at Ser-250 by SLK is required for PXN redistribution and cell motility. Phosphorylation at Ser-272 promotes focal adhesion disassembly during cell migration.

It is found in the cytoplasm. Its subcellular location is the cytoskeleton. The protein resides in the cell junction. The protein localises to the focal adhesion. It localises to the cell cortex. Functionally, cytoskeletal protein involved in actin-membrane attachment at sites of cell adhesion to the extracellular matrix (focal adhesion). Recruits other proteins such as TRIM15 to focal adhesion. This is Paxillin (PXN) from Pongo abelii (Sumatran orangutan).